Consider the following 469-residue polypeptide: MPYHLSESHKKLISSHLSESDPEVDAIIKDEIDRQKHSIVLIASENLTSTAVFDALGTPMCNKYSEGYPGARYYGGNQHIDRMELLCQRRALEAFHVTPDRWGVNVQSLSGSPANLQVYQALMKPHERLMGLHLPDGGHLSHGYQTETRKISAVSTYFESFPYRVDPETGIIDYDTLEKNAVLYRPKILVAGTSAYCRLIDYKRMREIADKVGAYLMVDMAHISGLVAAGVIPSPFEYADIVTTTTHKSLRGPRGAMIFFRRGVRSVHPKTGEEVMYDLEGPINFSVFPGHQGGPHNHTISALATALKQATTPEFREYQELVLKNAKVLETEFKKLNYRLVSDGTDSHMVLVSLREKGVDGARVEHVCEKINIALNKNSIPGDKSALVPGGVRIGAPAMTTRGMGEEDFARIVGYINRAVEIARSIQQSLPKEANRLKDFKAKVEDGTDEIAQLAQEIYSWTEEYPLPV.

K248 bears the N6-(pyridoxal phosphate)lysine mark.

It belongs to the SHMT family. In terms of assembly, homotetramer. It depends on pyridoxal 5'-phosphate as a cofactor.

It localises to the cytoplasm. The catalysed reaction is (6R)-5,10-methylene-5,6,7,8-tetrahydrofolate + glycine + H2O = (6S)-5,6,7,8-tetrahydrofolate + L-serine. It participates in one-carbon metabolism; tetrahydrofolate interconversion. Its function is as follows. Interconversion of serine and glycine. The sequence is that of Serine hydroxymethyltransferase, cytosolic (SHM2) from Eremothecium gossypii (strain ATCC 10895 / CBS 109.51 / FGSC 9923 / NRRL Y-1056) (Yeast).